Here is a 187-residue protein sequence, read N- to C-terminus: Acireductone dioxygenase (187 aa).

4 residues coordinate Fe(2+): His90, His92, Glu96, and His135. Residues His90, His92, Glu96, and His135 each coordinate Ni(2+).

The protein belongs to the acireductone dioxygenase (ARD) family. It depends on Fe(2+) as a cofactor. Requires Ni(2+) as cofactor.

It localises to the cytoplasm. Its subcellular location is the nucleus. The enzyme catalyses 1,2-dihydroxy-5-(methylsulfanyl)pent-1-en-3-one + O2 = 4-methylsulfanyl-2-oxobutanoate + formate + 2 H(+). It catalyses the reaction 1,2-dihydroxy-5-(methylsulfanyl)pent-1-en-3-one + O2 = 3-(methylsulfanyl)propanoate + CO + formate + 2 H(+). It functions in the pathway amino-acid biosynthesis; L-methionine biosynthesis via salvage pathway; L-methionine from S-methyl-5-thio-alpha-D-ribose 1-phosphate: step 5/6. Functionally, catalyzes 2 different reactions between oxygen and the acireductone 1,2-dihydroxy-3-keto-5-methylthiopentene (DHK-MTPene) depending upon the metal bound in the active site. Fe-containing acireductone dioxygenase (Fe-ARD) produces formate and 2-keto-4-methylthiobutyrate (KMTB), the alpha-ketoacid precursor of methionine in the methionine recycle pathway. Ni-containing acireductone dioxygenase (Ni-ARD) produces methylthiopropionate, carbon monoxide and formate, and does not lie on the methionine recycle pathway. This is Acireductone dioxygenase from Drosophila pseudoobscura pseudoobscura (Fruit fly).